Reading from the N-terminus, the 260-residue chain is MPDIDKHKLSLSFSRAAAQYDAIAGFQQQVAARLAQLLPAIPATCVLDGGCGTGTSSALLTRHWPDALLLACDLSPEMVRQAHARQLTAVCGDLEQLPFSKACFDVVWSSLVLQWCQPQLAYPELQRVLKHGGRLLFSTLTSGSLHELESTFGEIDRHRRVLPFASEQQVVDALYAAGFEHVQCQAERWVTQHADLKTLLTSIRGIGANQTGAARRPGMMGKTQWQAAQVRYENLRDADGMLPLTYSLLFVSAEKSRAQD.

The protein belongs to the methyltransferase superfamily.

The enzyme catalyses malonyl-[ACP] + S-adenosyl-L-methionine = malonyl-[ACP] methyl ester + S-adenosyl-L-homocysteine. It participates in cofactor biosynthesis; biotin biosynthesis. Its function is as follows. Converts the free carboxyl group of a malonyl-thioester to its methyl ester by transfer of a methyl group from S-adenosyl-L-methionine (SAM). It allows to synthesize pimeloyl-ACP via the fatty acid synthetic pathway. This chain is Malonyl-[acyl-carrier protein] O-methyltransferase, found in Herminiimonas arsenicoxydans.